The primary structure comprises 323 residues: tRNA U34 carboxymethyltransferase (323 aa).

Carboxy-S-adenosyl-L-methionine is bound by residues K91, W105, K110, G130, 181–182 (IE), M196, Y200, and R315.

It belongs to the class I-like SAM-binding methyltransferase superfamily. CmoB family. In terms of assembly, homotetramer.

The enzyme catalyses carboxy-S-adenosyl-L-methionine + 5-hydroxyuridine(34) in tRNA = 5-carboxymethoxyuridine(34) in tRNA + S-adenosyl-L-homocysteine + H(+). Catalyzes carboxymethyl transfer from carboxy-S-adenosyl-L-methionine (Cx-SAM) to 5-hydroxyuridine (ho5U) to form 5-carboxymethoxyuridine (cmo5U) at position 34 in tRNAs. The sequence is that of tRNA U34 carboxymethyltransferase from Yersinia pseudotuberculosis serotype O:1b (strain IP 31758).